Here is a 336-residue protein sequence, read N- to C-terminus: Glycerol-3-phosphate dehydrogenase [NAD(P)+] (336 aa).

NADPH is bound by residues Ser11, Trp12, Arg32, Arg33, and Lys110. Positions 110 and 140 each coordinate sn-glycerol 3-phosphate. Residue Ala144 participates in NADPH binding. Lys195, Asp248, Ser258, Arg259, and Asn260 together coordinate sn-glycerol 3-phosphate. The active-site Proton acceptor is Lys195. Arg259 is an NADPH binding site. NADPH-binding residues include Val284 and Glu286.

The protein belongs to the NAD-dependent glycerol-3-phosphate dehydrogenase family.

It is found in the cytoplasm. It carries out the reaction sn-glycerol 3-phosphate + NAD(+) = dihydroxyacetone phosphate + NADH + H(+). It catalyses the reaction sn-glycerol 3-phosphate + NADP(+) = dihydroxyacetone phosphate + NADPH + H(+). The protein operates within membrane lipid metabolism; glycerophospholipid metabolism. Its function is as follows. Catalyzes the reduction of the glycolytic intermediate dihydroxyacetone phosphate (DHAP) to sn-glycerol 3-phosphate (G3P), the key precursor for phospholipid synthesis. This is Glycerol-3-phosphate dehydrogenase [NAD(P)+] from Nocardia farcinica (strain IFM 10152).